A 379-amino-acid polypeptide reads, in one-letter code: Guanine nucleotide-binding protein G(s) subunit alpha (379 aa).

Residues 1–25 (MGCLGNSKTEDQRNEEKVQRETNKK) form a disordered region. Residue Gly2 is the site of N-palmitoyl glycine attachment. A lipid anchor (S-palmitoyl cysteine) is attached at Cys3. The segment covering 8–25 (KTEDQRNEEKVQRETNKK) has biased composition (basic and acidic residues). The region spanning 39 to 379 (ATHRLLLLGA…RMHLRQYELL (341 aa)) is the G-alpha domain. Residues 42 to 55 (RLLLLGAGESGKSS) form a G1 motif region. GTP-binding positions include 47–55 (GAGESGKSS), 182–189 (LLRCRVLT), 208–212 (DVGGQ), 277–280 (NKQD), and Ala351. Positions 54 and 189 each coordinate Mg(2+). A G2 motif region spans residues 181–189 (DLLRCRVLT). A G3 motif region spans residues 204-213 (FHMFDVGGQR). The segment at 273-280 (ILFLNKQD) is G4 motif. Positions 349 to 354 (TCAVDT) are G5 motif.

Belongs to the G-alpha family. G(s) subfamily. As to quaternary structure, heterotrimeric G proteins are composed of 3 units; alpha, beta and gamma. The alpha chain contains the guanine nucleotide binding site.

It localises to the cell membrane. In terms of biological role, guanine nucleotide-binding proteins (G proteins) function as transducers in numerous signaling pathways controlled by G protein-coupled receptors (GPCRs). Signaling involves the activation of adenylyl cyclases, resulting in increased levels of the signaling molecule cAMP. GNAS functions downstream of several GPCRs, including beta-adrenergic receptors. Stimulates the Ras signaling pathway. This Xenopus laevis (African clawed frog) protein is Guanine nucleotide-binding protein G(s) subunit alpha (gnas).